We begin with the raw amino-acid sequence, 330 residues long: 2-oxoisovalerate dehydrogenase subunit alpha (330 aa).

Residues phenylalanine 44, tyrosine 73, 107 to 110, and serine 123 each bind substrate; that span reads MPGH. Residue 72–74 participates in thiamine diphosphate binding; sequence YYR. Residues 123–125, 153–159, 183–187, and histidine 252 each bind thiamine diphosphate; these read SPV, GEGSSNQ, and NKYAI. Residues glutamate 154, asparagine 183, and tyrosine 185 each contribute to the Mg(2+) site. Residues 249–272 are disordered; the sequence is LTPHSSDDDDSSYRGREEVEEAKK. A compositionally biased stretch (basic and acidic residues) spans 259 to 272; that stretch reads SSYRGREEVEEAKK.

The protein belongs to the BCKDHA family. In terms of assembly, heterotetramer of two alpha and two beta chains. Directly associated with ODBB in the E1 complex. The cofactor is thiamine diphosphate.

The enzyme catalyses N(6)-[(R)-lipoyl]-L-lysyl-[protein] + 3-methyl-2-oxobutanoate + H(+) = N(6)-[(R)-S(8)-2-methylpropanoyldihydrolipoyl]-L-lysyl-[protein] + CO2. Functionally, the branched-chain alpha-keto dehydrogenase complex catalyzes the overall conversion of alpha-keto acids to acyl-CoA and CO(2). It contains multiple copies of three enzymatic components: branched-chain alpha-keto acid decarboxylase (E1), lipoamide acyltransferase (E2) and lipoamide dehydrogenase (E3). The sequence is that of 2-oxoisovalerate dehydrogenase subunit alpha (bfmBAA) from Bacillus subtilis (strain 168).